Consider the following 40-residue polypeptide: Photosystem II reaction center protein J (40 aa).

The chain crosses the membrane as a helical span at residues 8–28 (IPLWLIGTVTGIIVIGLIGIF).

It belongs to the PsbJ family. In terms of assembly, PSII is composed of 1 copy each of membrane proteins PsbA, PsbB, PsbC, PsbD, PsbE, PsbF, PsbH, PsbI, PsbJ, PsbK, PsbL, PsbM, PsbT, PsbX, PsbY, PsbZ, Psb30/Ycf12, at least 3 peripheral proteins of the oxygen-evolving complex and a large number of cofactors. It forms dimeric complexes.

The protein resides in the plastid. The protein localises to the chloroplast thylakoid membrane. Functionally, one of the components of the core complex of photosystem II (PSII). PSII is a light-driven water:plastoquinone oxidoreductase that uses light energy to abstract electrons from H(2)O, generating O(2) and a proton gradient subsequently used for ATP formation. It consists of a core antenna complex that captures photons, and an electron transfer chain that converts photonic excitation into a charge separation. In Piper cenocladum (Ant piper), this protein is Photosystem II reaction center protein J.